The primary structure comprises 462 residues: MNVMRLSKDSVAVGLSWLLTGLILLLVCLFSALIVRDYGRENEAARQTIQEKGSVLIRALESGTRVGMGMRMHHSQLQTLLEEMAWQPGVLWFAVTDENGKIIAHSDPRRVGESLYPASTLRELNIGSEERWRRLEQPEPALEIYRQFRPLNGGGHHMRMMMRRESADLRNQAPQVIFIAFDTRELDADHARGLRNMVIMLCAAGVVMAATVLAQFWFRRYQRSRKQLQEATARKEKLVALGHLAAGVAHEIRNPLSSIKGLAKYFAERTPADGEAHQLALVMAREADRLNRVVSELLELVRPAHLKYQSVDLNEVITHSLQLVSQDAASRAISLTFTAQPALCRIQADPDRLKQVLLNLYLNAVHAIGREGVITVAVRECGDGRVKVSVADSGKGMTAEQLQAIFTPYFSTKADGTGLGLAVVQNIVEQHGGTIDAESAPGKGALFTFYLPVNGQQKDEQG.

The Cytoplasmic portion of the chain corresponds to 1–14 (MNVMRLSKDSVAVG). A helical transmembrane segment spans residues 15–35 (LSWLLTGLILLLVCLFSALIV). The Periplasmic segment spans residues 36-197 (RDYGRENEAA…ADHARGLRNM (162 aa)). A helical membrane pass occupies residues 198-218 (VIMLCAAGVVMAATVLAQFWF). The Cytoplasmic portion of the chain corresponds to 219-462 (RRYQRSRKQL…VNGQQKDEQG (244 aa)). Residues 247–455 (GVAHEIRNPL…LFTFYLPVNG (209 aa)) enclose the Histidine kinase domain. Phosphohistidine; by autocatalysis is present on His-250.

Autophosphorylated.

The protein localises to the cell inner membrane. The catalysed reaction is ATP + protein L-histidine = ADP + protein N-phospho-L-histidine.. Activity of the ZraS/ZraR two-component system is repressed by the zinc-bound form of ZraP, which probably interacts with the periplasmic region of ZraS. In terms of biological role, part of the Zra signaling pathway, an envelope stress response (ESR) system composed of the periplasmic accessory protein ZraP, the histidine kinase ZraS and the transcriptional regulator ZraR. The ZraPSR system contributes to antibiotic resistance and is important for membrane integrity in the presence of membrane-targeting biocides. ZraS is a member of the two-component regulatory system ZraS/ZraR. Functions as a membrane-associated sensor kinase that phosphorylates ZraR in response to high concentrations of Zn(2+) or Pb(2+) in the medium. This chain is Sensor histidine kinase ZraS (zraS), found in Klebsiella oxytoca.